Consider the following 527-residue polypeptide: Catalase (527 aa).

Residues 1 to 22 show a composition bias toward basic and acidic residues; that stretch reads MADSRDPASDQMKHWKEERAAQ. The interval 1–32 is disordered; the sequence is MADSRDPASDQMKHWKEERAAQKPDVLTTAGG. N-acetylalanine is present on A2. Position 9 is a phosphoserine (S9). Residue K13 is modified to N6-succinyllysine. Active-site residues include H75 and N148. Residues H194, S201, R203, and N213 each coordinate NADP(+). K221 carries the post-translational modification N6-succinyllysine. Position 233 is an N6-acetyllysine (K233). Positions 237, 303, 305, and 306 each coordinate NADP(+). K306 carries the N6-acetyllysine; alternate modification. N6-succinyllysine; alternate is present on K306. A heme-binding site is contributed by Y358. Phosphoserine is present on S434. The residue at position 480 (K480) is an N6-acetyllysine; alternate. An N6-succinyllysine; alternate modification is found at K480. The residue at position 499 (K499) is an N6-acetyllysine. A Phosphothreonine modification is found at T511. S517 carries the post-translational modification Phosphoserine. Position 522 is an N6-succinyllysine (K522). Residues 524 to 527 carry the Microbody targeting signal; atypical motif; that stretch reads KANL.

Belongs to the catalase family. Homotetramer. Interacts (via microbody targeting signal) with PEX5, monomeric form interacts with PEX5, leading to its translocation into peroxisomes. Heme serves as cofactor. Requires NADP(+) as cofactor.

It is found in the peroxisome matrix. It carries out the reaction 2 H2O2 = O2 + 2 H2O. Catalyzes the degradation of hydrogen peroxide (H(2)O(2)) generated by peroxisomal oxidases to water and oxygen, thereby protecting cells from the toxic effects of hydrogen peroxide. Promotes growth of cells including T-cells, B-cells, myeloid leukemia cells, melanoma cells, mastocytoma cells and normal and transformed fibroblast cells. This is Catalase (CAT) from Cavia porcellus (Guinea pig).